A 106-amino-acid chain; its full sequence is Large ribosomal subunit protein uL24 (106 aa).

It belongs to the universal ribosomal protein uL24 family. In terms of assembly, part of the 50S ribosomal subunit.

In terms of biological role, one of two assembly initiator proteins, it binds directly to the 5'-end of the 23S rRNA, where it nucleates assembly of the 50S subunit. Functionally, one of the proteins that surrounds the polypeptide exit tunnel on the outside of the subunit. This Acinetobacter baylyi (strain ATCC 33305 / BD413 / ADP1) protein is Large ribosomal subunit protein uL24.